The sequence spans 287 residues: Probable F-box protein At5g04010 (287 aa).

Residues 50–101 (PSPPSWEILCLVGPYMDPESLAVASCVSTTWSKCFSSEDLWKSLPATRHSIF) form the F-box; degenerate domain.

This chain is Probable F-box protein At5g04010 (NSFBx), found in Arabidopsis thaliana (Mouse-ear cress).